The sequence spans 124 residues: Small ribosomal subunit protein uS12 (124 aa).

The interval 1-42 (MPTIQQLVRKGRRPKVNKTKSPALRGNPQQRGVCSRVYTTTP) is disordered. Residues 9-18 (RKGRRPKVNK) show a composition bias toward basic residues. The span at 27 to 42 (NPQQRGVCSRVYTTTP) shows a compositional bias: polar residues. Aspartate 89 bears the 3-methylthioaspartic acid mark.

The protein belongs to the universal ribosomal protein uS12 family. In terms of assembly, part of the 30S ribosomal subunit. Contacts proteins S8 and S17. May interact with IF1 in the 30S initiation complex.

With S4 and S5 plays an important role in translational accuracy. Functionally, interacts with and stabilizes bases of the 16S rRNA that are involved in tRNA selection in the A site and with the mRNA backbone. Located at the interface of the 30S and 50S subunits, it traverses the body of the 30S subunit contacting proteins on the other side and probably holding the rRNA structure together. The combined cluster of proteins S8, S12 and S17 appears to hold together the shoulder and platform of the 30S subunit. The chain is Small ribosomal subunit protein uS12 from Tropheryma whipplei (strain TW08/27) (Whipple's bacillus).